Here is a 210-residue protein sequence, read N- to C-terminus: Imidazole glycerol phosphate synthase subunit HisH 1 (210 aa).

The Glutamine amidotransferase type-1 domain maps to 3 to 210 (KIAIVDYGMC…LDNFLSFSNV (208 aa)). Cys-82 (nucleophile) is an active-site residue. Catalysis depends on residues His-189 and Glu-191.

In terms of assembly, heterodimer of HisH and HisF.

It localises to the cytoplasm. The enzyme catalyses 5-[(5-phospho-1-deoxy-D-ribulos-1-ylimino)methylamino]-1-(5-phospho-beta-D-ribosyl)imidazole-4-carboxamide + L-glutamine = D-erythro-1-(imidazol-4-yl)glycerol 3-phosphate + 5-amino-1-(5-phospho-beta-D-ribosyl)imidazole-4-carboxamide + L-glutamate + H(+). The catalysed reaction is L-glutamine + H2O = L-glutamate + NH4(+). It functions in the pathway amino-acid biosynthesis; L-histidine biosynthesis; L-histidine from 5-phospho-alpha-D-ribose 1-diphosphate: step 5/9. IGPS catalyzes the conversion of PRFAR and glutamine to IGP, AICAR and glutamate. The HisH subunit provides the glutamine amidotransferase activity that produces the ammonia necessary to HisF for the synthesis of IGP and AICAR. The chain is Imidazole glycerol phosphate synthase subunit HisH 1 (hisH1) from Parasynechococcus marenigrum (strain WH8102).